Reading from the N-terminus, the 237-residue chain is Phosphatidylserine decarboxylase proenzyme (237 aa).

Ser206 acts as the Schiff-base intermediate with substrate; via pyruvic acid in catalysis. Ser206 is modified (pyruvic acid (Ser); by autocatalysis).

Belongs to the phosphatidylserine decarboxylase family. PSD-A subfamily. In terms of assembly, heterodimer of a large membrane-associated beta subunit and a small pyruvoyl-containing alpha subunit. Requires pyruvate as cofactor. Is synthesized initially as an inactive proenzyme. Formation of the active enzyme involves a self-maturation process in which the active site pyruvoyl group is generated from an internal serine residue via an autocatalytic post-translational modification. Two non-identical subunits are generated from the proenzyme in this reaction, and the pyruvate is formed at the N-terminus of the alpha chain, which is derived from the carboxyl end of the proenzyme. The post-translation cleavage follows an unusual pathway, termed non-hydrolytic serinolysis, in which the side chain hydroxyl group of the serine supplies its oxygen atom to form the C-terminus of the beta chain, while the remainder of the serine residue undergoes an oxidative deamination to produce ammonia and the pyruvoyl prosthetic group on the alpha chain.

It localises to the cell membrane. The catalysed reaction is a 1,2-diacyl-sn-glycero-3-phospho-L-serine + H(+) = a 1,2-diacyl-sn-glycero-3-phosphoethanolamine + CO2. The protein operates within phospholipid metabolism; phosphatidylethanolamine biosynthesis; phosphatidylethanolamine from CDP-diacylglycerol: step 2/2. Its function is as follows. Catalyzes the formation of phosphatidylethanolamine (PtdEtn) from phosphatidylserine (PtdSer). In Rhodococcus erythropolis (strain PR4 / NBRC 100887), this protein is Phosphatidylserine decarboxylase proenzyme.